Here is a 315-residue protein sequence, read N- to C-terminus: MGPPKIGQTVVVEVPSTTANIGPGFDCLGAALDLSNQFTIKRIEGNAERFELIMESTEGNHLRGGPENLFYRAAQRVWRTAGIEPVALEARVKLAVPPARGLGSSATAIVAGLVGANALAGYPLPKEKLLELAIDIEGHPDNVVPSLIGGLCVTAKTASDRWRVVRCDWDKSIKAVVAIPSIRLSTSEARRVMPENIPVNDAVINLGALTLLLQGLRTGNEDLITDGMHDKLHEPYRWGLIKGGLEVREAAKAAGALGCAISGAGPSILALCKATKGREVSVAMVKAWEAAGVASRAPLMSLQLTGSECISNTFG.

97 to 107 (PPARGLGSSAT) is an ATP binding site.

Belongs to the GHMP kinase family. Homoserine kinase subfamily.

Its subcellular location is the cytoplasm. It carries out the reaction L-homoserine + ATP = O-phospho-L-homoserine + ADP + H(+). It functions in the pathway amino-acid biosynthesis; L-threonine biosynthesis; L-threonine from L-aspartate: step 4/5. Catalyzes the ATP-dependent phosphorylation of L-homoserine to L-homoserine phosphate. This chain is Homoserine kinase, found in Prochlorococcus marinus (strain NATL2A).